Reading from the N-terminus, the 821-residue chain is E3 ubiquitin-protein ligase RSP5 (821 aa).

A C2 domain is found at 1–112 (MGSNLPAQPN…QMGGDEMLTR (112 aa)). Polar residues-rich tracts occupy residues 133–144 (TNLSTPNPNQAN) and 188–201 (LNPQRVPSATRPTS). Disordered regions lie at residues 133-239 (TNLS…GWER) and 255-359 (RTTT…YFVD). Over residues 202-217 (QIAPPNGAPPIANGQG) the composition is skewed to low complexity. The WW 1 domain occupies 231-264 (GRLPAGWERREDNLGRTYYVDHNTRTTTWNRPSA). The span at 255-272 (RTTTWNRPSANYNEQTQR) shows a compositional bias: polar residues. The segment covering 281–296 (LERRAHQNRMLPEDRT) has biased composition (basic and acidic residues). Positions 297–312 (GASSPNLSETQPQAQT) are enriched in polar residues. Positions 320 to 339 (ASNSNVVSMMATGATTAGTG) are enriched in low complexity. WW domains are found at residues 339–372 (GELPPGWEQRTTPEGRPYFVDHNTRTTTWVDPRR) and 399–432 (GPLPSGWEMRLTNTARVYFVDHNTKTTTWDDPRL). Residues 488-821 (SASDLKKRLM…VEETLGFGQE (334 aa)) enclose the HECT domain. Residue C789 is the Glycyl thioester intermediate of the active site.

The protein belongs to the RSP5/NEDD4 family. As to quaternary structure, interacts with apyA and creD.

It localises to the cytoplasm. The enzyme catalyses S-ubiquitinyl-[E2 ubiquitin-conjugating enzyme]-L-cysteine + [acceptor protein]-L-lysine = [E2 ubiquitin-conjugating enzyme]-L-cysteine + N(6)-ubiquitinyl-[acceptor protein]-L-lysine.. Its pathway is protein modification; protein ubiquitination. In terms of biological role, E3 ubiquitin-protein ligase which accepts ubiquitin from an E2 ubiquitin-conjugating enzyme in the form of a thioester and then directly transfers the ubiquitin to targeted substrates. Probably involved in the regulatory network controlling carbon source utilization. Ubiquitinates 'Lys-528' of the uric acid/xanthine transporter uapA at the cell membrane, leading to its internalization, sorting into the endosomal pathway to the vacuolar lumen where it is eventually degraded. The sequence is that of E3 ubiquitin-protein ligase RSP5 (hulA) from Emericella nidulans (strain FGSC A4 / ATCC 38163 / CBS 112.46 / NRRL 194 / M139) (Aspergillus nidulans).